The following is a 346-amino-acid chain: Uroporphyrinogen decarboxylase (346 aa).

Residues 21–25 (RQAGR), aspartate 71, tyrosine 146, serine 201, and histidine 316 each bind substrate.

Belongs to the uroporphyrinogen decarboxylase family. In terms of assembly, homodimer.

The protein localises to the cytoplasm. It carries out the reaction uroporphyrinogen III + 4 H(+) = coproporphyrinogen III + 4 CO2. The protein operates within porphyrin-containing compound metabolism; protoporphyrin-IX biosynthesis; coproporphyrinogen-III from 5-aminolevulinate: step 4/4. Its function is as follows. Catalyzes the decarboxylation of four acetate groups of uroporphyrinogen-III to yield coproporphyrinogen-III. The chain is Uroporphyrinogen decarboxylase from Rickettsia africae (strain ESF-5).